Reading from the N-terminus, the 291-residue chain is Nucleotide-binding protein PPA0813 (291 aa).

17–24 serves as a coordination point for ATP; the sequence is GISGAGRR. 66–69 provides a ligand contact to GTP; it reads DVRS.

Belongs to the RapZ-like family.

Functionally, displays ATPase and GTPase activities. This Cutibacterium acnes (strain DSM 16379 / KPA171202) (Propionibacterium acnes) protein is Nucleotide-binding protein PPA0813.